A 199-amino-acid chain; its full sequence is MKFSPLVDELIQSLRCLPGVGPKSAQRMAFALLESDRKAGIRLADTLSRAMSDVGHCQKCRTFTEQSLCPICSSSRRGEADTLCVVETPADVLAIESGGHFQGRYFVLQGHLSPLDGIGPEELGLSLLEGQLVGGGISELILATNPTVEGDATAHYIADIARRAGVAVSRIAHGVPVGGELEYVDSTTLALSFNGRLPL.

A C4-type zinc finger spans residues 57–72; it reads CQKCRTFTEQSLCPIC. A Toprim domain is found at 81–176; that stretch reads DTLCVVETPA…AVSRIAHGVP (96 aa).

Belongs to the RecR family.

May play a role in DNA repair. It seems to be involved in an RecBC-independent recombinational process of DNA repair. It may act with RecF and RecO. The sequence is that of Recombination protein RecR from Shewanella amazonensis (strain ATCC BAA-1098 / SB2B).